The chain runs to 1511 residues: Pleiotropic ABC efflux transporter of multiple drugs (1511 aa).

Polar residues predominate over residues 1–14; the sequence is MPEAKLNNNVNDVT. A disordered region spans residues 1–32; that stretch reads MPEAKLNNNVNDVTSYSSASSSTENAADLHNY. Topologically, residues 1–517 are cytoplasmic; that stretch reads MPEAKLNNNV…LLIRNMWRLR (517 aa). Phosphoserine is present on Ser22. Phosphothreonine occurs at positions 49 and 51. A disordered region spans residues 52 to 71; sequence AQSMQNSTQSAPNKSDAQSI. 3 positions are modified to phosphoserine: Ser54, Ser58, and Ser61. Positions 161–410 constitute an ABC transporter 1 domain; the sequence is LRKFQRSKET…FEDMGYVCPS (250 aa). The helical transmembrane segment at 518 to 542 threads the bilayer; sequence NNIGFTLFMILGNCSMALILGSMFF. Topologically, residues 543 to 558 are extracellular; it reads KIMKKGDTSTFYFRGS. Residues 559–579 traverse the membrane as a helical segment; that stretch reads AMFFAILFNAFSSLLEIFSLY. At 580–611 the chain is on the cytoplasmic side; it reads EARPITEKHRTYSLYHPSADAFASVLSEIPSK. A helical membrane pass occupies residues 612 to 628; it reads LIIAVCFNIIFYFLVDF. The Extracellular segment spans residues 629-631; sequence RRN. The chain crosses the membrane as a helical span at residues 632–650; the sequence is GGVFFFYLLINIVAVFSMS. Residues 651-665 are Cytoplasmic-facing; that stretch reads HLFRCVGSLTKTLSE. A helical membrane pass occupies residues 666-685; it reads AMVPASMLLLALSMYTGFAI. Residues 686–774 are Extracellular-facing; it reads PKKKILRWSK…QYYHKDKWRG (89 aa). N-linked (GlcNAc...) asparagine glycosylation occurs at Asn734. The helical transmembrane segment at 775–793 threads the bilayer; it reads FGIGMAYVVFFFFVYLFLC. The Cytoplasmic segment spans residues 794-1237; that stretch reads EYNEGAKQKG…GTSLQGLQNQ (444 aa). The interval 824-858 is disordered; the sequence is EKNANDPENVGERSDLSSDRKMLQESSEEESDTYG. Residue Lys825 forms a Glycyl lysine isopeptide (Lys-Gly) (interchain with G-Cter in ubiquitin) linkage. The segment covering 833–846 has biased composition (basic and acidic residues); sequence VGERSDLSSDRKML. Phosphoserine occurs at positions 837, 840, 841, 849, 850, and 854. One can recognise an ABC transporter 2 domain in the interval 869-1112; that stretch reads FHWRNLCYEV…MIDYFESHGA (244 aa). An ATP-binding site is contributed by 905 to 912; it reads GASGAGKT. The chain crosses the membrane as a helical span at residues 1238–1260; sequence MLAVFMFTVIFNPILQQYLPSFV. Over 1261 to 1291 the chain is Extracellular; it reads QQRDLYEARERPSRTFSWISFIFAQIFVEVP. Residues 1292 to 1313 traverse the membrane as a helical segment; that stretch reads WNILAGTIAYFIYYYPIGFYSN. Topologically, residues 1314–1324 are cytoplasmic; the sequence is ASAAGQLHERG. The chain crosses the membrane as a helical span at residues 1325 to 1349; it reads ALFWLFSCAFYVYVGSMGLLVISFN. Topologically, residues 1350-1354 are extracellular; that stretch reads QVAES. Residues 1355–1379 form a helical membrane-spanning segment; sequence AANLASLLFTMSLSFCGVMTTPSAM. The Cytoplasmic segment spans residues 1380–1388; that stretch reads PRFWIFMYR. Residues 1389–1407 traverse the membrane as a helical segment; sequence VSPLTYFIQALLAVGVANV. Residues 1408 to 1476 lie on the Extracellular side of the membrane; it reads DVKCADYELL…VNSFYSERWR (69 aa). A glycan (N-linked (GlcNAc...) asparagine) is linked at Asn1447. The helical transmembrane segment at 1477 to 1499 threads the bilayer; the sequence is NYGIFICYIAFNYIAGVFFYWLA. Residues 1500–1511 are Cytoplasmic-facing; the sequence is RVPKKNGKLSKK.

It belongs to the ABC transporter superfamily. ABCG family. PDR (TC 3.A.1.205) subfamily. In terms of processing, ubiquitinylation mediates endocytosis and vacuolar degradation. Phosphorylation by casein kinase I stabilizes the protein half-life.

It localises to the cell membrane. Its activity is regulated as follows. FK506, isonitrile, enniatin, RU49953, kitasatospora E420, staurosporine CGP42700, prenyl-flavonoids, D-octapeptides were found to be inhibitors in vivo. Vanadate and oligomycin were found to be inhibitors in vitro. Its function is as follows. Active efflux of weakly charged organic compounds of 90 cubic Angstroms to 300 cubic Angstroms surface volume. Confers resistance to numerous chemicals including cycloheximide, sulfomethuron methyl, steroids, antiseptics, antibiotics, anticancer, herbicides, mycotoxins, insecticides, ionophores, alkaloids, flavonoids, phenothiazines, organotin compounds, carbazoles, lysosomotropic aminoesters, detergents, rhodamines and other fluorophores, azoles and other antifungals. Exhibits nucleoside triphosphatase activity. This chain is Pleiotropic ABC efflux transporter of multiple drugs (PDR5), found in Saccharomyces cerevisiae (strain ATCC 204508 / S288c) (Baker's yeast).